The chain runs to 241 residues: Deoxynucleotide monophosphate kinase (241 aa).

Position 10 (Lys10) interacts with dGMP. Residues Arg11, Gly13, Asp15, and Thr16 each contribute to the ATP site. DGMP-binding residues include Ile36 and Lys37. Tyr42 is a binding site for Mg(2+). Arg68 serves as a coordination point for dGMP. Residues Gln85 and Glu108 each contribute to the Mg(2+) site. Residues Arg132, Gly139, Thr140, Val144, Trp152, Asp175, Arg177, Gln178, Glu181, and Thr208 each contribute to the dGMP site.

The protein belongs to the dNMP kinase family. As to quaternary structure, homodimer. It depends on Mg(2+) as a cofactor.

The catalysed reaction is dTMP + ATP = dTDP + ADP. It carries out the reaction dGMP + ATP = dGDP + ADP. It catalyses the reaction 5-hydroxymethyl-dCMP + ATP = 5-hydroxymethyl-dCDP + ADP. Its activity is regulated as follows. Inhibited by pyridoxal 5'-phosphate and diethylpyrocarbonate. In terms of biological role, allows the synthesis of deoxyribonucleoside triphosphates necessary for the rapid viral DNA replication. Phosphorylates dGMP, dTMP and 5-hydroxymethyl-dCMP (hmdCMP) while excluding dCMP and dAMP. The phosphorylation of 5-hydroxymethyl-dCMP represents the first step in the replacement of cytosine by hydroxymethylcytosine in new viral DNA genomes. The chain is Deoxynucleotide monophosphate kinase (1) from Enterobacteria phage T4 (Bacteriophage T4).